Consider the following 757-residue polypeptide: Xylosyl- and glucuronyltransferase LARGE1 (757 aa).

Over 1 to 10 the chain is Cytoplasmic; that stretch reads MLGMCRGRRK. A helical; Signal-anchor for type II membrane protein membrane pass occupies residues 11-31; sequence FVAASLALIFIPALTWLYLSS. Residues 32 to 757 lie on the Lumenal side of the membrane; the sequence is ANITVKPLPL…LKYMTVDNNS (726 aa). Residues 50 to 82 are a coiled coil; that stretch reads AVVGAAAEHQSLELRLRDVEEHNNALRREISRT. The disordered stretch occupies residues 76-127; the sequence is RREISRTPRVPTHSSHPSSSRHGNQLHTHSTEEGTGDSEAKKGAAAGNSSDC. Residues 82–97 are compositionally biased toward low complexity; the sequence is TPRVPTHSSHPSSSRH. 2 N-linked (GlcNAc...) asparagine glycosylation sites follow: N123 and N149. Residues 139 to 414 form a xylosyltransferase activity region; that stretch reads IHIAIVCAGY…FLEYDGNLLR (276 aa). The Mn(2+) site is built by D243 and D245. Residue N273 is glycosylated (N-linked (GlcNAc...) asparagine). Residues 415–757 are glucuronyltransferase activity; sequence RELFGCPSET…LKYMTVDNNS (343 aa). Residues D564 and D566 each contribute to the Mn(2+) site. N-linked (GlcNAc...) asparagine glycosylation occurs at N738.

This sequence in the C-terminal section; belongs to the glycosyltransferase 49 family. It in the N-terminal section; belongs to the glycosyltransferase 8 family. It depends on Mn(2+) as a cofactor.

It is found in the golgi apparatus membrane. It carries out the reaction 3-O-[beta-D-GlcA-(1-&gt;3)-beta-D-Xyl-(1-&gt;4)-Rib-ol-P-Rib-ol-P-3-beta-D-GalNAc-(1-&gt;3)-beta-D-GlcNAc-(1-&gt;4)-(O-6-P-alpha-D-Man)]-Thr-[protein] + UDP-alpha-D-xylose = 3-O-[alpha-D-Xyl-(1-&gt;3)-beta-D-GlcA-(1-&gt;4)-beta-D-Xyl-(1-&gt;4)-Rib-ol-P-Rib-ol-P-3-beta-D-GalNAc-(1-&gt;3)-beta-D-GlcNAc-(1-&gt;4)-(O-6-P-alpha-D-Man)]-Thr-[protein] + UDP + H(+). The catalysed reaction is 3-O-{(1-&gt;[3)-alpha-D-Xyl-(1-&gt;3)-beta-D-GlcA-(1-&gt;](n)-4)-beta-D-Xyl-(1-&gt;4)-Rib-ol-P-Rib-ol-P-3-beta-D-GalNAc-(1-&gt;3)-beta-D-GlcNAc-(1-&gt;4)-O-6-P-alpha-D-Man}-L-Thr-[protein] + UDP-alpha-D-glucuronate = 3-O-{beta-D-GlcA-(1-&gt;[3)-alpha-D-Xyl-(1-&gt;3)-beta-D-GlcA-(1-&gt;](n)-4)-beta-D-Xyl-(1-&gt;4)-Rib-ol-P-Rib-ol-P-3-beta-D-GalNAc-(1-&gt;3)-beta-D-GlcNAc-(1-&gt;4)-O-6-P-alpha-D-Man}-L-Thr-[protein] + UDP + H(+). It catalyses the reaction 3-O-{beta-D-GlcA-(1-&gt;[3)-alpha-D-Xyl-(1-&gt;3)-beta-D-GlcA-(1-&gt;](n)-4)-beta-D-Xyl-(1-&gt;4)-Rib-ol-P-Rib-ol-P-3-beta-D-GalNAc-(1-&gt;3)-beta-D-GlcNAc-(1-&gt;4)-O-6-P-alpha-D-Man}-L-Thr-[protein] + UDP-alpha-D-xylose = 3-O-{(1-&gt;[3)-alpha-D-Xyl-(1-&gt;3)-beta-D-GlcA-(1-&gt;](n+1)-4)-beta-D-Xyl-(1-&gt;4)-Rib-ol-P-Rib-ol-P-3-beta-D-GalNAc-(1-&gt;3)-beta-D-GlcNAc-(1-&gt;4)-O-6-P-alpha-D-Man}-L-Thr-[protein] + UDP + H(+). It participates in protein modification; protein glycosylation. Bifunctional glycosyltransferase with both alpha-1,3-xylosyltransferase and beta-1,3-glucuronyltransferase activities involved in the maturation of alpha-dystroglycan (DAG1) by glycosylation leading to DAG1 binding to laminin G-like domain-containing extracellular proteins with high affinity. Elongates the glucuronyl-beta-1,4-xylose-beta disaccharide primer structure initiated by B4GAT1 by adding repeating units [-3-Xylose-alpha-1,3-GlcA-beta-1-] to produce a heteropolysaccharide. Requires the phosphorylation of core M3 (O-mannosyl trisaccharide) by POMK to elongate the glucuronyl-beta-1,4-xylose-beta disaccharide primer. Plays a key role in skeletal muscle function and regeneration. In Danio rerio (Zebrafish), this protein is Xylosyl- and glucuronyltransferase LARGE1.